The primary structure comprises 548 residues: Dihydroxy-acid dehydratase (548 aa).

A Mg(2+)-binding site is contributed by aspartate 78. Position 119 (cysteine 119) interacts with [2Fe-2S] cluster. Mg(2+)-binding residues include aspartate 120 and lysine 121. At lysine 121 the chain carries N6-carboxylysine. A [2Fe-2S] cluster-binding site is contributed by cysteine 185. Glutamate 438 provides a ligand contact to Mg(2+). Catalysis depends on serine 464, which acts as the Proton acceptor.

The protein belongs to the IlvD/Edd family. In terms of assembly, homodimer. [2Fe-2S] cluster is required as a cofactor. The cofactor is Mg(2+).

The catalysed reaction is (2R)-2,3-dihydroxy-3-methylbutanoate = 3-methyl-2-oxobutanoate + H2O. It carries out the reaction (2R,3R)-2,3-dihydroxy-3-methylpentanoate = (S)-3-methyl-2-oxopentanoate + H2O. Its pathway is amino-acid biosynthesis; L-isoleucine biosynthesis; L-isoleucine from 2-oxobutanoate: step 3/4. It functions in the pathway amino-acid biosynthesis; L-valine biosynthesis; L-valine from pyruvate: step 3/4. In terms of biological role, functions in the biosynthesis of branched-chain amino acids. Catalyzes the dehydration of (2R,3R)-2,3-dihydroxy-3-methylpentanoate (2,3-dihydroxy-3-methylvalerate) into 2-oxo-3-methylpentanoate (2-oxo-3-methylvalerate) and of (2R)-2,3-dihydroxy-3-methylbutanoate (2,3-dihydroxyisovalerate) into 2-oxo-3-methylbutanoate (2-oxoisovalerate), the penultimate precursor to L-isoleucine and L-valine, respectively. In Methanothrix thermoacetophila (strain DSM 6194 / JCM 14653 / NBRC 101360 / PT) (Methanosaeta thermophila), this protein is Dihydroxy-acid dehydratase.